The chain runs to 168 residues: ATP synthase subunit b (168 aa).

Residues 7-26 (FVLSNFIFTLINLWIMYWVL) form a helical membrane-spanning segment.

Belongs to the ATPase B chain family. In terms of assembly, F-type ATPases have 2 components, F(1) - the catalytic core - and F(0) - the membrane proton channel. F(1) has five subunits: alpha(3), beta(3), gamma(1), delta(1), epsilon(1). F(0) has three main subunits: a(1), b(2) and c(10-14). The alpha and beta chains form an alternating ring which encloses part of the gamma chain. F(1) is attached to F(0) by a central stalk formed by the gamma and epsilon chains, while a peripheral stalk is formed by the delta and b chains.

It localises to the cell membrane. F(1)F(0) ATP synthase produces ATP from ADP in the presence of a proton or sodium gradient. F-type ATPases consist of two structural domains, F(1) containing the extramembraneous catalytic core and F(0) containing the membrane proton channel, linked together by a central stalk and a peripheral stalk. During catalysis, ATP synthesis in the catalytic domain of F(1) is coupled via a rotary mechanism of the central stalk subunits to proton translocation. Its function is as follows. Component of the F(0) channel, it forms part of the peripheral stalk, linking F(1) to F(0). This chain is ATP synthase subunit b, found in Alkaliphilus metalliredigens (strain QYMF).